We begin with the raw amino-acid sequence, 626 residues long: Elongation factor 4 (626 aa).

A tr-type G domain is found at 14–195 (SLIRNFCIIA…RIVVDVPAPT (182 aa)). Residues 26 to 31 (DHGKST) and 142 to 145 (NKID) contribute to the GTP site. The disordered stretch occupies residues 603-626 (LSTGEGGNDRDTKDKIRAAQKSEG). Positions 609-626 (GNDRDTKDKIRAAQKSEG) are enriched in basic and acidic residues.

Belongs to the TRAFAC class translation factor GTPase superfamily. Classic translation factor GTPase family. LepA subfamily.

It is found in the cell membrane. The catalysed reaction is GTP + H2O = GDP + phosphate + H(+). Its function is as follows. Required for accurate and efficient protein synthesis under certain stress conditions. May act as a fidelity factor of the translation reaction, by catalyzing a one-codon backward translocation of tRNAs on improperly translocated ribosomes. Back-translocation proceeds from a post-translocation (POST) complex to a pre-translocation (PRE) complex, thus giving elongation factor G a second chance to translocate the tRNAs correctly. Binds to ribosomes in a GTP-dependent manner. The sequence is that of Elongation factor 4 from Bifidobacterium animalis subsp. lactis (strain AD011).